Reading from the N-terminus, the 505-residue chain is Lysine--tRNA ligase (505 aa).

E415 and E422 together coordinate Mg(2+).

This sequence belongs to the class-II aminoacyl-tRNA synthetase family. In terms of assembly, homodimer. Mg(2+) is required as a cofactor.

Its subcellular location is the cytoplasm. The enzyme catalyses tRNA(Lys) + L-lysine + ATP = L-lysyl-tRNA(Lys) + AMP + diphosphate. This chain is Lysine--tRNA ligase, found in Serratia proteamaculans (strain 568).